The following is a 650-amino-acid chain: Fructose-1,6-bisphosphatase class 3 (650 aa).

This sequence belongs to the FBPase class 3 family. Mn(2+) serves as cofactor.

The enzyme catalyses beta-D-fructose 1,6-bisphosphate + H2O = beta-D-fructose 6-phosphate + phosphate. Its pathway is carbohydrate biosynthesis; gluconeogenesis. The polypeptide is Fructose-1,6-bisphosphatase class 3 (Finegoldia magna (strain ATCC 29328 / DSM 20472 / WAL 2508) (Peptostreptococcus magnus)).